A 326-amino-acid chain; its full sequence is NAD-dependent protein deacylase SIR5 (326 aa).

The transit peptide at 1-26 (MRLLRPTPRLSSIFSSKTATSNLRFF) directs the protein to the mitochondrion. A Deacetylase sirtuin-type domain is found at 28–324 (AMAPHNDVGA…IGKLETDKKE (297 aa)). 53 to 72 (GAGLSASSGLPTFRGAGGLW) serves as a coordination point for NAD(+). Substrate-binding residues include Tyr97 and Arg100. Residue His151 is the Proton acceptor of the active site. The Zn(2+) site is built by Cys159, Cys162, Cys211, and Cys214.

The protein belongs to the sirtuin family. Class I subfamily. As to quaternary structure, interacts with LAT1; the interaction is direct. Zn(2+) is required as a cofactor.

The protein resides in the mitochondrion. It is found in the cytoplasm. Its subcellular location is the cytosol. The protein localises to the nucleus. It localises to the chromosome. It carries out the reaction N(6)-acetyl-L-lysyl-[protein] + NAD(+) + H2O = 2''-O-acetyl-ADP-D-ribose + nicotinamide + L-lysyl-[protein]. The catalysed reaction is N(6)-(2E)-butenoyl-L-lysyl-[protein] + H2O = (2E)-2-butenoate + L-lysyl-[protein]. Its function is as follows. NAD-dependent protein-lysine deacylase that decrotonylates the PDC (pyruvate dehydrogenase complex) subunit LAT1 at 'Lys-148' to inhibit PDC activity and consequently ATP production. Also decrotonylates histone H3 crotonylated at 'Lys-18' (H3K18cr), to repress the expression of genes involved in aerobic respiration. May also act as a NAD-dependent deacetylase. Does not mediate desuccinylation, demalonylation, or deglutarylation of LAT1. The polypeptide is NAD-dependent protein deacylase SIR5 (Fusarium oxysporum f. sp. lycopersici (strain 4287 / CBS 123668 / FGSC 9935 / NRRL 34936) (Fusarium vascular wilt of tomato)).